We begin with the raw amino-acid sequence, 918 residues long: Glutamate receptor ionotropic, kainate 1 (918 aa).

An N-terminal signal peptide occupies residues 1-30 (MEHGTLLAQPGLWTRDTSWALLYFLCYILP). Residues 31 to 576 (QTAPQVLRIG…VFSFLNPLSP (546 aa)) are Extracellular-facing. 7 N-linked (GlcNAc...) asparagine glycosylation sites follow: N68, N74, N276, N379, N428, N439, and N446. L-glutamate-binding residues include P531, T533, and R538. A glycan (N-linked (GlcNAc...) asparagine) is linked at N561. The helical transmembrane segment at 577 to 597 (DIWMYVLLACLGVSCVLFVIA) threads the bilayer. The Cytoplasmic segment spans residues 598 to 653 (RFTPYEWYNPHPCNPDSDVVENNFTLLNSFWFGVGALMQQGSELMPKALSTRIVGG). Residues 654-674 (IWWFFTLIIISSYTANLAAFL) form a helical membrane-spanning segment. Residues 675-834 (TVERMESPID…KEASALGVEN (160 aa)) lie on the Extracellular side of the membrane. L-glutamate-binding residues include S704 and T705. S725 carries the phosphoserine; by PKC modification. E753 serves as a coordination point for L-glutamate. T761 carries the post-translational modification Phosphothreonine; by PKC. Cysteines 765 and 819 form a disulfide. N766 is a glycosylation site (N-linked (GlcNAc...) asparagine). Residues 835–855 (IGGIFIVLAAGLVLSVFVAIG) traverse the membrane as a helical segment. Topologically, residues 856 to 918 (EFIYKSRKNN…IRKQSSVHTV (63 aa)) are cytoplasmic.

This sequence belongs to the glutamate-gated ion channel (TC 1.A.10.1) family. GRIK1 subfamily. As to quaternary structure, homotetramer or heterotetramer of pore-forming glutamate receptor subunits. Tetramers may be formed by the dimerization of dimers. Can form functional heteromeric receptors with GRIK5. Can form functional heteromeric receptors with GRIK4. Interacts with KLHL17.

The protein resides in the cell membrane. It is found in the postsynaptic cell membrane. It carries out the reaction Ca(2+)(in) = Ca(2+)(out). Its function is as follows. Ionotropic glutamate receptor that functions as a cation-permeable ligand-gated ion channel, gated by L-glutamate and the glutamatergic agonist kainic acid. L-glutamate acts as an excitatory neurotransmitter at many synapses in the central nervous system. Binding of the excitatory neurotransmitter L-glutamate induces a conformation change, leading to the opening of the cation channel, and thereby converts the chemical signal to an electrical impulse. The receptor then desensitizes rapidly and enters a transient inactive state, characterized by the presence of bound agonist. Functionally, ionotropic glutamate receptor that functions as a cation-permeable ligand-gated ion channel, gated by L-glutamate and the glutamatergic agonist kainic acid. The chain is Glutamate receptor ionotropic, kainate 1 (GRIK1) from Homo sapiens (Human).